The following is a 477-amino-acid chain: Bifunctional protein HldE (477 aa).

The ribokinase stretch occupies residues 1 to 320 (MKDSLPAFEK…SLSDTHHSET (320 aa)). 195-198 (NLHE) contacts ATP. D264 is a catalytic residue. The tract at residues 346 to 477 (MTNGCFDILH…KIIENIMANQ (132 aa)) is cytidylyltransferase.

This sequence in the N-terminal section; belongs to the carbohydrate kinase PfkB family. The protein in the C-terminal section; belongs to the cytidylyltransferase family. In terms of assembly, homodimer.

It carries out the reaction D-glycero-beta-D-manno-heptose 7-phosphate + ATP = D-glycero-beta-D-manno-heptose 1,7-bisphosphate + ADP + H(+). The catalysed reaction is D-glycero-beta-D-manno-heptose 1-phosphate + ATP + H(+) = ADP-D-glycero-beta-D-manno-heptose + diphosphate. Its pathway is nucleotide-sugar biosynthesis; ADP-L-glycero-beta-D-manno-heptose biosynthesis; ADP-L-glycero-beta-D-manno-heptose from D-glycero-beta-D-manno-heptose 7-phosphate: step 1/4. It participates in nucleotide-sugar biosynthesis; ADP-L-glycero-beta-D-manno-heptose biosynthesis; ADP-L-glycero-beta-D-manno-heptose from D-glycero-beta-D-manno-heptose 7-phosphate: step 3/4. Catalyzes the phosphorylation of D-glycero-D-manno-heptose 7-phosphate at the C-1 position to selectively form D-glycero-beta-D-manno-heptose-1,7-bisphosphate. Its function is as follows. Catalyzes the ADP transfer from ATP to D-glycero-beta-D-manno-heptose 1-phosphate, yielding ADP-D-glycero-beta-D-manno-heptose. The protein is Bifunctional protein HldE of Shewanella piezotolerans (strain WP3 / JCM 13877).